The chain runs to 510 residues: NAD(P)H-quinone oxidoreductase subunit 2 A, chloroplastic (510 aa).

13 consecutive transmembrane segments (helical) span residues 24 to 44 (LLLFDGSLIFPECILIFGLIL), 57 to 77 (IPWLYFISSTSLVMSITALLF), 99 to 119 (IFQFLILLCSTLCIPLSVEYI), 124 to 144 (MAITEFLLFVLTATLGGMFLC), 149 to 169 (LITIFVAPECFSLCSYLLSGY), 183 to 203 (YLLMGGASSSILVHGFSWLYG), 227 to 247 (PGISIALIFITVGIGFKLSPA), 295 to 315 (WHLLLEILAILSMILGNLIAI), 323 to 343 (MLAYSSIGQIGYVIIGIIVGD), 354 to 374 (YMLFYISMNLGTFACIVLFGL), 395 to 415 (ALSLALCLLSLGGLPPLAGFF), 418 to 438 (LYLFWCGWQAGLYFLVLIGLL), and 484 to 504 (MIVCVIASTIPGISMNPIIAI).

This sequence belongs to the complex I subunit 2 family. NDH is composed of at least 16 different subunits, 5 of which are encoded in the nucleus.

It localises to the plastid. Its subcellular location is the chloroplast thylakoid membrane. It catalyses the reaction a plastoquinone + NADH + (n+1) H(+)(in) = a plastoquinol + NAD(+) + n H(+)(out). It carries out the reaction a plastoquinone + NADPH + (n+1) H(+)(in) = a plastoquinol + NADP(+) + n H(+)(out). NDH shuttles electrons from NAD(P)H:plastoquinone, via FMN and iron-sulfur (Fe-S) centers, to quinones in the photosynthetic chain and possibly in a chloroplast respiratory chain. The immediate electron acceptor for the enzyme in this species is believed to be plastoquinone. Couples the redox reaction to proton translocation, and thus conserves the redox energy in a proton gradient. The protein is NAD(P)H-quinone oxidoreductase subunit 2 A, chloroplastic of Panax ginseng (Korean ginseng).